Consider the following 306-residue polypeptide: D-alanine--D-alanine ligase (306 aa).

The ATP-grasp domain maps to 102-300 (KIIAANAGVC…YGDIVQWMVE (199 aa)). ATP is bound at residue 128-183 (PMEPPYVIKPVCEGSSFGVVIVQENEAVPPHNIGGSEWGYADEVMVEKYIPGRELT). Mg(2+) contacts are provided by D253, E267, and N269.

The protein belongs to the D-alanine--D-alanine ligase family. The cofactor is Mg(2+). Mn(2+) is required as a cofactor.

It is found in the cytoplasm. It catalyses the reaction 2 D-alanine + ATP = D-alanyl-D-alanine + ADP + phosphate + H(+). It functions in the pathway cell wall biogenesis; peptidoglycan biosynthesis. Functionally, cell wall formation. This is D-alanine--D-alanine ligase from Bartonella tribocorum (strain CIP 105476 / IBS 506).